The following is a 316-amino-acid chain: Protoheme IX farnesyltransferase (316 aa).

Transmembrane regions (helical) follow at residues 29–49 (IIPL…EGRV), 54–74 (LLIT…LNCI), 102–122 (LIFA…FVNV), 123–143 (LSGC…THWL), 151–171 (IVIG…AVTG), 179–199 (VLFA…ALMI), 224–241 (IWYY…LVYP), 245–267 (LGIL…AWQL), and 283–303 (FSIF…LPVT).

Belongs to the UbiA prenyltransferase family. Protoheme IX farnesyltransferase subfamily.

It localises to the cell inner membrane. It carries out the reaction heme b + (2E,6E)-farnesyl diphosphate + H2O = Fe(II)-heme o + diphosphate. It functions in the pathway porphyrin-containing compound metabolism; heme O biosynthesis; heme O from protoheme: step 1/1. Converts heme B (protoheme IX) to heme O by substitution of the vinyl group on carbon 2 of heme B porphyrin ring with a hydroxyethyl farnesyl side group. The protein is Protoheme IX farnesyltransferase of Synechocystis sp. (strain ATCC 27184 / PCC 6803 / Kazusa).